Consider the following 598-residue polypeptide: Elongation factor 4 (598 aa).

The tr-type G domain maps to 2–184 (NRIRNFSIIA…TIVAKLPPPK (183 aa)). GTP contacts are provided by residues 14–19 (DHGKST) and 131–134 (NKID).

This sequence belongs to the TRAFAC class translation factor GTPase superfamily. Classic translation factor GTPase family. LepA subfamily.

The protein resides in the cell inner membrane. It catalyses the reaction GTP + H2O = GDP + phosphate + H(+). Required for accurate and efficient protein synthesis under certain stress conditions. May act as a fidelity factor of the translation reaction, by catalyzing a one-codon backward translocation of tRNAs on improperly translocated ribosomes. Back-translocation proceeds from a post-translocation (POST) complex to a pre-translocation (PRE) complex, thus giving elongation factor G a second chance to translocate the tRNAs correctly. Binds to ribosomes in a GTP-dependent manner. This Desulfosudis oleivorans (strain DSM 6200 / JCM 39069 / Hxd3) (Desulfococcus oleovorans) protein is Elongation factor 4.